We begin with the raw amino-acid sequence, 67 residues long: Alpha-conotoxin-like Qc1.1b (67 aa).

The first 21 residues, methionine 1–serine 21, serve as a signal peptide directing secretion. Residues phenylalanine 22–arginine 46 constitute a propeptide that is removed on maturation. Cystine bridges form between cysteine 49/cysteine 55 and cysteine 50/cysteine 63. Residues aspartate 51–proline 53 are lacks the Ser-Xaa-Pro motif that is crucial for potent interaction with nAChR.

The protein belongs to the conotoxin A superfamily. In terms of tissue distribution, expressed by the venom duct.

It localises to the secreted. In terms of biological role, alpha-conotoxins act on postsynaptic membranes, they bind to the nicotinic acetylcholine receptors (nAChR) and thus inhibit them. Has possibly a distinct nAChR binding mode from other alpha-conotoxins, due to a different three residue motif (lacks the Ser-Xaa-Pro motif). This Conus quercinus (Oak cone) protein is Alpha-conotoxin-like Qc1.1b.